We begin with the raw amino-acid sequence, 971 residues long: Kinesin-like protein KIN-14C (971 aa).

The 106-residue stretch at 14–119 (ANRRAEVIDW…CLLALKDNVA (106 aa)) folds into the Calponin-homology (CH) domain. Positions 272 to 357 (IKALETLVNG…QMETKARQME (86 aa)) form a coiled coil. The 328-residue stretch at 472-799 (NIRVYCRVRP…LKFAERVSGV (328 aa)) folds into the Kinesin motor domain. ATP is bound at residue 556 to 563 (GQTGSGKT). Residues 809 to 844 (EGKDIKELLEQVASLKDTIARKDMEIEQLQLLKSKS) adopt a coiled-coil conformation. Residues 839–881 (LLKSKSPNSMTDRNGSNLLRQSTSSTGLSSLPVASQQNQQLSG) show a composition bias toward polar residues. A disordered region spans residues 839-971 (LLKSKSPNSM…GSLAKPSKRR (133 aa)).

The protein belongs to the TRAFAC class myosin-kinesin ATPase superfamily. Kinesin family. KIN-14 subfamily.

The chain is Kinesin-like protein KIN-14C from Oryza sativa subsp. japonica (Rice).